Here is a 67-residue protein sequence, read N- to C-terminus: Large ribosomal subunit protein bL31 (67 aa).

Zn(2+)-binding residues include C16, C18, C36, and C39.

This sequence belongs to the bacterial ribosomal protein bL31 family. Type A subfamily. In terms of assembly, part of the 50S ribosomal subunit. Requires Zn(2+) as cofactor.

Its function is as follows. Binds the 23S rRNA. The protein is Large ribosomal subunit protein bL31 of Treponema denticola (strain ATCC 35405 / DSM 14222 / CIP 103919 / JCM 8153 / KCTC 15104).